A 218-amino-acid chain; its full sequence is Small ribosomal subunit protein uS3c (218 aa).

The region spanning 47–118 is the KH type-2 domain; the sequence is VQKHMRISSG…RLNIAIARVA (72 aa).

This sequence belongs to the universal ribosomal protein uS3 family. In terms of assembly, part of the 30S ribosomal subunit.

It is found in the plastid. It localises to the chloroplast. The sequence is that of Small ribosomal subunit protein uS3c (rps3) from Nymphaea alba (White water-lily).